We begin with the raw amino-acid sequence, 547 residues long: Chaperonin GroEL (547 aa).

ATP contacts are provided by residues T29–P32, D86–T90, G413, and D498.

Belongs to the chaperonin (HSP60) family. Forms a cylinder of 14 subunits composed of two heptameric rings stacked back-to-back. Interacts with the co-chaperonin GroES.

It localises to the cytoplasm. The enzyme catalyses ATP + H2O + a folded polypeptide = ADP + phosphate + an unfolded polypeptide.. Functionally, together with its co-chaperonin GroES, plays an essential role in assisting protein folding. The GroEL-GroES system forms a nano-cage that allows encapsulation of the non-native substrate proteins and provides a physical environment optimized to promote and accelerate protein folding. This chain is Chaperonin GroEL, found in Herpetosiphon aurantiacus (strain ATCC 23779 / DSM 785 / 114-95).